The primary structure comprises 457 residues: MADS-box transcription factor 1 (457 aa).

Positions 11 to 71 (PSSPRRSIQR…NACHVYSSEE (61 aa)) constitute an MADS-box domain. Disordered stretches follow at residues 195–278 (SGDY…SRLH) and 295–328 (SSGY…LGQE). The segment covering 199-216 (SDSPLEPSSSSSFSVPPE) has biased composition (low complexity). Residues 218-234 (LNPTLSFQHNDVPQTDN) show a composition bias toward polar residues. Over residues 265-278 (KNRRNGKPRISRLH) the composition is skewed to basic residues. Positions 295–317 (SSGYLDPSSTPITPLDSAINQIT) are enriched in polar residues. Residue S372 is modified to Phosphoserine.

In terms of processing, phosphorylated. Occurs periodically during mitosis.

It localises to the nucleus. Functionally, acts as a transcriptional activator with a role in the regulation of mitosis. Regulates septation and the periodic transcription of cdc15. In Schizosaccharomyces pombe (strain 972 / ATCC 24843) (Fission yeast), this protein is MADS-box transcription factor 1 (mbx1).